The sequence spans 104 residues: L-rhamnose mutarotase (104 aa).

Tyr-18 is a binding site for substrate. His-22 functions as the Proton donor in the catalytic mechanism. Residues Tyr-41 and 76–77 contribute to the substrate site; that span reads WW.

It belongs to the rhamnose mutarotase family. In terms of assembly, homodimer.

It is found in the cytoplasm. The enzyme catalyses alpha-L-rhamnose = beta-L-rhamnose. It participates in carbohydrate metabolism; L-rhamnose metabolism. In terms of biological role, involved in the anomeric conversion of L-rhamnose. This chain is L-rhamnose mutarotase, found in Klebsiella pneumoniae subsp. pneumoniae (strain ATCC 700721 / MGH 78578).